We begin with the raw amino-acid sequence, 175 residues long: MSTIAKDQTQINDKIRAKELRLIGQDGEQIGVKSKREALKMAERVDLDLVVVAPNAKPPVARIMDYGKFKFEQQKKEKEMKKKQKIINVKEIRLSPTIEEHDFQTKLKNGRKFLTKGDKCKVSIRFRGRAITHKEIGQRVLEKYADECKDIATVEQKPKMDGRQMFIMLAPTAEK.

It belongs to the IF-3 family. Monomer.

The protein localises to the cytoplasm. IF-3 binds to the 30S ribosomal subunit and shifts the equilibrium between 70S ribosomes and their 50S and 30S subunits in favor of the free subunits, thus enhancing the availability of 30S subunits on which protein synthesis initiation begins. In Staphylococcus aureus (strain NCTC 8325 / PS 47), this protein is Translation initiation factor IF-3.